The chain runs to 173 residues: Ribosome maturation factor RimM (173 aa).

Residues 98 to 170 enclose the PRC barrel domain; that stretch reads EGEFYWCDLI…IMTVSPTEGL (73 aa).

Belongs to the RimM family. Binds ribosomal protein uS19.

It is found in the cytoplasm. An accessory protein needed during the final step in the assembly of 30S ribosomal subunit, possibly for assembly of the head region. Essential for efficient processing of 16S rRNA. May be needed both before and after RbfA during the maturation of 16S rRNA. It has affinity for free ribosomal 30S subunits but not for 70S ribosomes. The sequence is that of Ribosome maturation factor RimM from Geobacter metallireducens (strain ATCC 53774 / DSM 7210 / GS-15).